Here is a 318-residue protein sequence, read N- to C-terminus: MAVNPQGVAAVLADLKGRDFLSCADFTAEQTVALLELSRQLKSGDRRIDLGNRVLGLIFTKASTRTRVSFQVAMARLGGQTVDLNPQVTQLGRGEPLEDTARVLSRFCDVMAVRTFAQQELLDYAHWASIPVLNALTDLEHPCQAMADFLTIQEALGSLTGQTLAYVGDGNNVSHSLMLCGALLGVNVRIGCPQGFEPLPEVIDQARNLAVADARIEVMTDPVDAVRGAQALYTDVWASMGQEQEQSQREEAFRGFCLNEDLLAHADPNAIVLHCLPAHRGEEISSGVMEGEASRIFDQAENRLHVQQALLAAVLGGL.

Carbamoyl phosphate is bound by residues 63 to 66 (STRT), Gln-90, Arg-114, and 141 to 144 (HPCQ). L-ornithine contacts are provided by residues Asn-172, Asp-235, and 239–240 (SM). Carbamoyl phosphate-binding positions include 275-276 (CL) and Arg-303.

This sequence belongs to the aspartate/ornithine carbamoyltransferase superfamily. OTCase family.

It localises to the cytoplasm. It carries out the reaction carbamoyl phosphate + L-ornithine = L-citrulline + phosphate + H(+). It functions in the pathway amino-acid biosynthesis; L-arginine biosynthesis; L-arginine from L-ornithine and carbamoyl phosphate: step 1/3. In terms of biological role, reversibly catalyzes the transfer of the carbamoyl group from carbamoyl phosphate (CP) to the N(epsilon) atom of ornithine (ORN) to produce L-citrulline. In Prochlorococcus marinus (strain MIT 9313), this protein is Ornithine carbamoyltransferase.